The chain runs to 333 residues: Ferrochelatase (333 aa).

Residues histidine 202 and glutamate 284 each contribute to the Fe cation site.

Belongs to the ferrochelatase family.

The protein localises to the cytoplasm. It carries out the reaction heme b + 2 H(+) = protoporphyrin IX + Fe(2+). Its pathway is porphyrin-containing compound metabolism; protoheme biosynthesis; protoheme from protoporphyrin-IX: step 1/1. In terms of biological role, catalyzes the ferrous insertion into protoporphyrin IX. The protein is Ferrochelatase of Francisella tularensis subsp. holarctica (strain LVS).